The following is a 313-amino-acid chain: N-acetyl-gamma-glutamyl-phosphate reductase (313 aa).

The active site involves cysteine 117.

The protein belongs to the NAGSA dehydrogenase family. Type 2 subfamily.

Its subcellular location is the cytoplasm. The enzyme catalyses N-acetyl-L-glutamate 5-semialdehyde + phosphate + NADP(+) = N-acetyl-L-glutamyl 5-phosphate + NADPH + H(+). It participates in amino-acid biosynthesis; L-arginine biosynthesis; N(2)-acetyl-L-ornithine from L-glutamate: step 3/4. In terms of biological role, catalyzes the NADPH-dependent reduction of N-acetyl-5-glutamyl phosphate to yield N-acetyl-L-glutamate 5-semialdehyde. This chain is N-acetyl-gamma-glutamyl-phosphate reductase, found in Burkholderia cenocepacia (strain HI2424).